Here is a 385-residue protein sequence, read N- to C-terminus: Aspartate carbamoyltransferase 2, chloroplastic (385 aa).

The N-terminal 30 residues, 1–30 (MTASSSLFSCSMHMEVLTPKISKWPKNFVS), are a transit peptide targeting the chloroplast. The carbamoyl phosphate site is built by Arg131 and Thr132. UMP is bound by residues Arg131 and Thr132. Lys161 serves as a coordination point for L-aspartate. Residues Arg182, His210, and Gln213 each coordinate carbamoyl phosphate. UMP contacts are provided by Arg182 and His210. The UMP site is built by Arg243 and Arg305. The L-aspartate site is built by Arg243 and Arg305. The carbamoyl phosphate site is built by Leu345 and Pro346.

It belongs to the aspartate/ornithine carbamoyltransferase superfamily. ATCase family. As to quaternary structure, homotrimer.

Its subcellular location is the plastid. It localises to the chloroplast. The catalysed reaction is carbamoyl phosphate + L-aspartate = N-carbamoyl-L-aspartate + phosphate + H(+). Its pathway is pyrimidine metabolism; UMP biosynthesis via de novo pathway; (S)-dihydroorotate from bicarbonate: step 2/3. Its activity is regulated as follows. Feedback inhibited by UMP. Catalyzes the condensation of carbamoyl phosphate and aspartate to form carbamoyl aspartate and inorganic phosphate, the committed step in the de novo pyrimidine nucleotide biosynthesis pathway. The protein is Aspartate carbamoyltransferase 2, chloroplastic (PYRB2) of Pisum sativum (Garden pea).